The sequence spans 437 residues: RING finger protein 150 (437 aa).

The signal sequence occupies residues 1–34 (MTMSLIQACRSLALSTWLLSFCFVHLLCLDFTVA). At 35-207 (EKEEWYTAFV…NLQKYVSRTS (173 aa)) the chain is on the extracellular side. Residues N45, N124, N152, and N185 are each glycosylated (N-linked (GlcNAc...) asparagine). Residues 80-182 (SPKQDARGEV…PKGKEIVSLL (103 aa)) enclose the PA domain. The helical transmembrane segment at 208-228 (VVFVSISFIVLMIISLAWLVF) threads the bilayer. Residues 229–437 (YYIQRFRYAN…TDQDCEEVKS (209 aa)) lie on the Cytoplasmic side of the membrane. The RING-type; atypical zinc-finger motif lies at 277–318 (CAVCIEGYKPNDVVRILPCRHLFHKSCVDPWLLDHRTCPMCK).

It is found in the membrane. This Mus musculus (Mouse) protein is RING finger protein 150 (Rnf150).